Consider the following 2190-residue polypeptide: Voltage-dependent L-type calcium channel subunit alpha-1D (2190 aa).

Low complexity predominate over residues 1–10 (MQHHQQQQPE). Disordered stretches follow at residues 1 to 44 (MQHH…SKQT) and 57 to 96 (QAKA…SNSR). Residues 1-121 (MQHHQQQQPE…RACISLVEWK (121 aa)) are Cytoplasmic-facing. 2 stretches are compositionally biased toward polar residues: residues 31–44 (PTTQ…SKQT) and 63–76 (NMNT…GSLS). Residues 77–88 (QRKRQQYAKSKK) are compositionally biased toward basic residues. An I repeat occupies 108-404 (NPIRRACISL…LVLGVLSGEF (297 aa)). Residues 122-140 (PFDIFILLSIFANCVALAV) form a helical membrane-spanning segment. Over 141–158 (YIPFPEDDSNSTNHNLEK) the chain is Extracellular. N-linked (GlcNAc...) asparagine glycosylation is present at Asn150. The helical transmembrane segment at 159-178 (VEYAFLIIFTVETFLKIIAY) threads the bilayer. Residues 179–190 (GLLLHPNAYVRN) are Cytoplasmic-facing. The helical transmembrane segment at 191–209 (GWNLLDFVIVVVGLFSVIL) threads the bilayer. The Extracellular segment spans residues 210 to 230 (EQLTKETEGGSHSGGKPGGFD). The chain crosses the membrane as a helical span at residues 231-249 (VKALRAFRVLRPLRLVSGV). The Cytoplasmic portion of the chain corresponds to 250-268 (PSLQVVLNSIIKAMVPLLH). The helical transmembrane segment at 269 to 288 (IALLVLFVIIIYAIIGLELF) threads the bilayer. Residues 289–376 (IGKMHKSCFL…WVNDAIGCEW (88 aa)) lie on the Extracellular side of the membrane. Residue Asn324 is glycosylated (N-linked (GlcNAc...) asparagine). Glu359 is a binding site for Ca(2+). A helical membrane pass occupies residues 377–401 (PWIYFVSLIILGSFFVLNLVLGVLS). Residues 402 to 544 (GEFSKEREKA…RKCRAAVKSV (143 aa)) are Cytoplasmic-facing. Residues 424-441 (QQLEEDLKGYLDWITQAE) form a binding to the beta subunit region. Residues 478 to 500 (GRSSNKHASMPTSETESVNTENV) are disordered. The stretch at 530-776 (NRFNRRKCRA…VFLAIAVDNL (247 aa)) is one II repeat. Residues 545–564 (TFYWLVIVLVFLNTLTISSE) traverse the membrane as a helical segment. Residues 565 to 579 (HYNQPDWLTQIQDIA) are Extracellular-facing. The chain crosses the membrane as a helical span at residues 580 to 598 (NKVLLALFTCEMLVKMYSL). Topologically, residues 599–606 (GLQAYFVS) are cytoplasmic. Residues 607-625 (LFNRFDCFVVCGGIVETIL) traverse the membrane as a helical segment. Topologically, residues 626–635 (VELEIMSPLG) are extracellular. Residues 636–654 (ISVFRCVRLLRIFKVTRHW) form a helical membrane-spanning segment. Residues 655 to 673 (ASLSNLVASLLNSMKSIAS) are Cytoplasmic-facing. The chain crosses the membrane as a helical span at residues 674–694 (LLLLLFLFIIIFSLLGMQLFG). Residues 695-748 (GKFNFDETQTKRSTFDNFPQALLTVFQILTGEDWNAVMYDGIMAYGGPSSSGMI) lie on the Extracellular side of the membrane. Glu726 contributes to the Ca(2+) binding site. Residues 749-773 (VCIYFIILFICGNYILLNVFLAIAV) form a helical membrane-spanning segment. Topologically, residues 774–907 (DNLADAESLN…VGCHRLINHH (134 aa)) are cytoplasmic. The segment covering 787 to 823 (KEEAEEKERKKNARKESLENKKSEKSEGDQKKPKDSK) has biased composition (basic and acidic residues). Residues 787–869 (KEEAEEKERK…VPAGPRPRRI (83 aa)) form a disordered region. The span at 847–859 (VGEDEEDEEDEPE) shows a compositional bias: acidic residues. The III repeat unit spans residues 894–1176 (NPIRVGCHRL…IFVGFVIVTF (283 aa)). The helical transmembrane segment at 908–926 (IFTNLILVFIMLSSVSLAA) threads the bilayer. Topologically, residues 927-942 (EDPIRSHSFRNNILGY) are extracellular. A helical membrane pass occupies residues 943 to 962 (ADYVFTSMFTFEIILKMTAF). Over 963–974 (GAFLHKGSFCRN) the chain is Cytoplasmic. The chain crosses the membrane as a helical span at residues 975 to 993 (YFNLLDLLVVGVSLVSFGI). The Extracellular portion of the chain corresponds to 994–999 (QSSAIS). Residues 1000–1019 (VVKILRVLRVLRPLRAINRA) traverse the membrane as a helical segment. Residues 1020–1038 (KGLKHVVQCVFVAIRTIGN) are Cytoplasmic-facing. The chain crosses the membrane as a helical span at residues 1039–1058 (IMIVTTLLQFMFACIGVQLF). Over 1059 to 1148 (KGKFYKCTDE…VGPVYNYRVE (90 aa)) the chain is Extracellular. The interval 1096–1186 (RVWQNSDFNF…QEQGEQEYKN (91 aa)) is dihydropyridine binding. Ca(2+) is bound at residue Glu1122. The chain crosses the membrane as a helical span at residues 1149–1169 (ISIFFIIYIIIIAFFMMNIFV). The Cytoplasmic segment spans residues 1170-1226 (GFVIVTFQEQGEQEYKNCELDKNQRQCVEYALKARPLRRYIPKNPYQYKFWYVVNST). The IV repeat unit spans residues 1213 to 1496 (NPYQYKFWYV…LFVAVIMDNF (284 aa)). The chain crosses the membrane as a helical span at residues 1227-1245 (GFEYIMFVLIMLNTLCLAM). Over 1246–1260 (QHYGQSKLFNDAMDI) the chain is Extracellular. Residues 1261 to 1280 (MNMVFTGVFTVEMVLKLIAF) form a helical membrane-spanning segment. The Cytoplasmic portion of the chain corresponds to 1281 to 1297 (KPKIFVRKKERWLGYFS). A helical transmembrane segment spans residues 1298–1319 (DAWNTFDSLIVIGSIVDVVLSE). Residues 1320–1342 (ADPKPTETVTTDESGNSEDSARI) lie on the Extracellular side of the membrane. A helical transmembrane segment spans residues 1343–1362 (SITFFRLFRVMRLVKLLSRG). The Cytoplasmic portion of the chain corresponds to 1363–1381 (EGIRTLLWTFIKSFQALPY). Residues 1382–1401 (VALLIAMLFFIYAVIGMQVF) traverse the membrane as a helical segment. Over 1402–1468 (GKVAMRDNNQ…GEEYTCGSNF (67 aa)) the chain is Extracellular. The tract at residues 1449–1515 (RCDPESDYNP…LGPHHLDEFK (67 aa)) is dihydropyridine binding. The tract at residues 1461 to 1504 (EYTCGSNFAIIYFISFYMLCAFLIINLFVAVIMDNFDYLTRDWS) is phenylalkylamine binding. A helical transmembrane segment spans residues 1469 to 1493 (AIIYFISFYMLCAFLIINLFVAVIM). Over 1494 to 2190 (DNFDYLTRDW…ADEMICITSL (697 aa)) the chain is Cytoplasmic. Disordered regions lie at residues 1736 to 1787 (THRP…NANL), 1803 to 1833 (FGSH…SRRT), 1917 to 1952 (HGFF…RSSF), and 1995 to 2025 (SSKA…HTPY). A compositionally biased stretch (basic and acidic residues) spans 1805 to 1823 (SHEHRSENGYHSYSRADHE). The segment covering 1824-1833 (KRRRPSSRRT) has biased composition (basic residues).

It belongs to the calcium channel alpha-1 subunit (TC 1.A.1.11) family. CACNA1D subfamily. Voltage-dependent calcium channels are multisubunit complexes, consisting of alpha-1, alpha-2, beta and delta subunits in a 1:1:1:1 ratio. The channel activity is directed by the pore-forming and voltage-sensitive alpha-1 subunit. In many cases, this subunit is sufficient to generate voltage-sensitive calcium channel activity. The auxiliary subunits beta and alpha-2/delta linked by a disulfide bridge regulate the channel activity. Interacts with RIMBP2. Expressed in the basilar papilla of the cochlea.

Its subcellular location is the membrane. It catalyses the reaction Ca(2+)(in) = Ca(2+)(out). The isoform alpha-1D gives rise to L-type calcium currents. Long-lasting (L-type) calcium channels belong to the 'high-voltage activated' (HVA) group. This is Voltage-dependent L-type calcium channel subunit alpha-1D (CACNA1D) from Gallus gallus (Chicken).